The primary structure comprises 102 residues: MAGQNTMEGEAVALLMEAVVTPRAQPNNTTITAIQPSRSAEKCYYSDSENETADEFLRRIGKYQHKIYHRKKFCYITLIIVFVFAMTGAAFALGYITSQFVG.

At M1–Y75 the chain is on the intravirion side. Residues L14–L15 carry the Di-leucine internalization motif motif. The interval E41–E55 is acidic. Residues S46 and S48 each carry the phosphoserine; by host CK2 modification. The chain crosses the membrane as a helical; Signal-anchor for type II membrane protein span at residues I76–I96. Over T97 to G102 the chain is Virion surface.

The protein belongs to the alphaherpesvirinae envelope protein US9 family. Post-translationally, phosphorylated on serines within the acidic cluster, possibly by host CK2. Phosphorylation determines whether endocytosed viral US9 traffics to the trans-Golgi network or recycles to the cell membrane.

The protein localises to the virion membrane. It is found in the host Golgi apparatus membrane. Its subcellular location is the host Golgi apparatus. The protein resides in the host trans-Golgi network. It localises to the host cell membrane. Functionally, essential for the anterograde spread of the infection throughout the host nervous system. Together with the gE/gI heterodimer, US9 is involved in the sorting and transport of viral structural components toward axon tips. This chain is Envelope protein US9, found in Varicella-zoster virus (strain Dumas) (HHV-3).